The primary structure comprises 307 residues: Oxygen-dependent coproporphyrinogen-III oxidase (307 aa).

Serine 99 is a binding site for substrate. The a divalent metal cation site is built by histidine 103 and histidine 113. Residue histidine 113 is the Proton donor of the active site. Position 115–117 (115–117 (NVR)) interacts with substrate. Residues histidine 152 and histidine 182 each contribute to the a divalent metal cation site. An important for dimerization region spans residues 247–282 (YVEFNLVFDRGTLFGLQSGGRTESILMSMPPVANWR). Residue 265–267 (GGR) participates in substrate binding.

This sequence belongs to the aerobic coproporphyrinogen-III oxidase family. As to quaternary structure, homodimer. Requires a divalent metal cation as cofactor.

The protein localises to the cytoplasm. The enzyme catalyses coproporphyrinogen III + O2 + 2 H(+) = protoporphyrinogen IX + 2 CO2 + 2 H2O. The protein operates within porphyrin-containing compound metabolism; protoporphyrin-IX biosynthesis; protoporphyrinogen-IX from coproporphyrinogen-III (O2 route): step 1/1. Involved in the heme biosynthesis. Catalyzes the aerobic oxidative decarboxylation of propionate groups of rings A and B of coproporphyrinogen-III to yield the vinyl groups in protoporphyrinogen-IX. The polypeptide is Oxygen-dependent coproporphyrinogen-III oxidase (Burkholderia orbicola (strain MC0-3)).